Consider the following 125-residue polypeptide: Ribonuclease P protein component (125 aa).

The protein belongs to the RnpA family. Consists of a catalytic RNA component (M1 or rnpB) and a protein subunit.

It carries out the reaction Endonucleolytic cleavage of RNA, removing 5'-extranucleotides from tRNA precursor.. In terms of biological role, RNaseP catalyzes the removal of the 5'-leader sequence from pre-tRNA to produce the mature 5'-terminus. It can also cleave other RNA substrates such as 4.5S RNA. The protein component plays an auxiliary but essential role in vivo by binding to the 5'-leader sequence and broadening the substrate specificity of the ribozyme. In Rhodococcus opacus (strain B4), this protein is Ribonuclease P protein component.